We begin with the raw amino-acid sequence, 356 residues long: MRRELLLEKIETYKAVMPWYVLDYYQSKLAVPYSFTTLYEYLKEYKRFFDWLMDADLTQAPKIADIDLSTLEHLTKKDLEAFVLYLRERPSLNTYSTKEGLSQTTINRTLSALSSLYKYLTEEVENDQGEPYFYRNVMKKVSTKKKKETLASRAENIKQKLFLGDETLAFLDYVDKEYEQKLSNRAKSSFRKNKERDLAIIALLLASGVRLSEAVNLDLKDVNLNMMIIEVIRKGGKRDSVNVAGFAKGYLESYLAVRQRRYKAEKQDLAFFLTEYRGVPNRMDASSIEKMVGKYSEDFKIRVTPHKLRHTLATRLYDATKSQVLVSHQLGHSSTQVTDLYTHIVNDEQKNALDNL.

A Core-binding (CB) domain is found at 16–121; it reads VMPWYVLDYY…ALSSLYKYLT (106 aa). In terms of domain architecture, Tyr recombinase spans 169 to 354; it reads AFLDYVDKEY…VNDEQKNALD (186 aa). Residues Arg-210, Lys-234, His-306, Arg-309, and His-332 contribute to the active site. Residue Tyr-341 is the O-(3'-phospho-DNA)-tyrosine intermediate of the active site.

Belongs to the 'phage' integrase family. XerS subfamily.

Its subcellular location is the cytoplasm. FtsK is required for recombination. Its function is as follows. Site-specific tyrosine recombinase, which acts by catalyzing the cutting and rejoining of the recombining DNA molecules. Essential to convert dimers of the bacterial chromosome into monomers to permit their segregation at cell division. The sequence is that of Tyrosine recombinase XerS from Streptococcus pyogenes serotype M28 (strain MGAS6180).